Here is a 412-residue protein sequence, read N- to C-terminus: Serine hydroxymethyltransferase (412 aa).

Residues L117 and 121 to 123 contribute to the (6S)-5,6,7,8-tetrahydrofolate site; that span reads GHL. Residue K226 is modified to N6-(pyridoxal phosphate)lysine. 349 to 351 lines the (6S)-5,6,7,8-tetrahydrofolate pocket; that stretch reads SPF.

It belongs to the SHMT family. As to quaternary structure, homodimer. It depends on pyridoxal 5'-phosphate as a cofactor.

It is found in the cytoplasm. The catalysed reaction is (6R)-5,10-methylene-5,6,7,8-tetrahydrofolate + glycine + H2O = (6S)-5,6,7,8-tetrahydrofolate + L-serine. It participates in one-carbon metabolism; tetrahydrofolate interconversion. It functions in the pathway amino-acid biosynthesis; glycine biosynthesis; glycine from L-serine: step 1/1. Functionally, catalyzes the reversible interconversion of serine and glycine with tetrahydrofolate (THF) serving as the one-carbon carrier. This reaction serves as the major source of one-carbon groups required for the biosynthesis of purines, thymidylate, methionine, and other important biomolecules. Also exhibits THF-independent aldolase activity toward beta-hydroxyamino acids, producing glycine and aldehydes, via a retro-aldol mechanism. The polypeptide is Serine hydroxymethyltransferase (Halothermothrix orenii (strain H 168 / OCM 544 / DSM 9562)).